A 344-amino-acid polypeptide reads, in one-letter code: GDSL esterase/lipase At5g03590 (344 aa).

The N-terminal stretch at 1–19 is a signal peptide; the sequence is MHYLMKLFFSLSLFFGING. Ser-41 (nucleophile) is an active-site residue. N-linked (GlcNAc...) asparagine glycans are attached at residues Asn-126, Asn-227, and Asn-238. The active site involves Asp-318.

This sequence belongs to the 'GDSL' lipolytic enzyme family.

It localises to the secreted. This is GDSL esterase/lipase At5g03590 from Arabidopsis thaliana (Mouse-ear cress).